A 178-amino-acid chain; its full sequence is Putative magnesium-dependent phosphatase YER134C (178 aa).

Asp11 (nucleophile) is an active-site residue. Residue Asp11 participates in Mg(2+) binding. Phosphate-binding residues include Leu12, Asp13, Ser74, and Arg75. Asp13 contacts Mg(2+). The active-site Proton donor is Asp13. Arg75 contacts substrate. Asp141 contacts Mg(2+).

Belongs to the HAD-like hydrolase superfamily.

The protein resides in the cytoplasm. The protein localises to the nucleus. It carries out the reaction O-phospho-L-tyrosyl-[protein] + H2O = L-tyrosyl-[protein] + phosphate. Its function is as follows. Magnesium-dependent phosphatase which may act as a tyrosine phosphatase. This is Putative magnesium-dependent phosphatase YER134C from Saccharomyces cerevisiae (strain ATCC 204508 / S288c) (Baker's yeast).